The primary structure comprises 241 residues: Hydantoin racemase (241 aa).

Belongs to the HyuE racemase family. As to quaternary structure, homotetramer.

The enzyme catalyses a D-5-monosubstituted hydantoin = a L-5-monosubstituted hydantoin. The catalysed reaction is D-5-benzylhydantoin = L-5-benzylhydantoin. It catalyses the reaction D-5-isobutylhydantoin = L-5-isobutylhydantoin. Inhibited by Cu(2+), Hg(2+), Pb(2+) and Zn(2+). The activity is twofold lower in the presence of Mn(2+), Co(2+) and Ni(2+). The insignificant effect of the metal chelating agent EDTA on the hydantoin racemase activity would indicate that it is not a metalloenzyme. In terms of biological role, may be involved in the asymmetric conversion of racemic 5-substituted hydantoins to the corresponding L-amino acids. Catalyzes the racemization via enolization of D- and L-5-monosubstituted hydantoins. This Rhizobium meliloti (Ensifer meliloti) protein is Hydantoin racemase.